Here is a 114-residue protein sequence, read N- to C-terminus: Putative pterin-4-alpha-carbinolamine dehydratase (114 aa).

Belongs to the pterin-4-alpha-carbinolamine dehydratase family.

It carries out the reaction (4aS,6R)-4a-hydroxy-L-erythro-5,6,7,8-tetrahydrobiopterin = (6R)-L-erythro-6,7-dihydrobiopterin + H2O. This is Putative pterin-4-alpha-carbinolamine dehydratase from Chlorobium luteolum (strain DSM 273 / BCRC 81028 / 2530) (Pelodictyon luteolum).